We begin with the raw amino-acid sequence, 265 residues long: Hemin import ATP-binding protein HmuV (265 aa).

Positions 13–249 constitute an ABC transporter domain; the sequence is LKASNLHLQL…TAVENVYGWP (237 aa). 45-52 is a binding site for ATP; the sequence is GPNGAGKS.

Belongs to the ABC transporter superfamily. Heme (hemin) importer (TC 3.A.1.14.5) family. In terms of assembly, the complex is composed of two ATP-binding proteins (HmuV), two transmembrane proteins (HmuU) and a solute-binding protein (HmuT).

The protein localises to the cell inner membrane. Functionally, part of the ABC transporter complex HmuTUV involved in hemin import. Responsible for energy coupling to the transport system. The chain is Hemin import ATP-binding protein HmuV from Photobacterium damselae subsp. damselae (Listonella damsela).